Consider the following 256-residue polypeptide: Thiazole synthase (256 aa).

The Schiff-base intermediate with DXP role is filled by Lys-97. 1-deoxy-D-xylulose 5-phosphate is bound by residues Gly-158, 184–185 (AG), and 206–207 (NT).

It belongs to the ThiG family. In terms of assembly, homotetramer. Forms heterodimers with either ThiH or ThiS.

Its subcellular location is the cytoplasm. It carries out the reaction [ThiS sulfur-carrier protein]-C-terminal-Gly-aminoethanethioate + 2-iminoacetate + 1-deoxy-D-xylulose 5-phosphate = [ThiS sulfur-carrier protein]-C-terminal Gly-Gly + 2-[(2R,5Z)-2-carboxy-4-methylthiazol-5(2H)-ylidene]ethyl phosphate + 2 H2O + H(+). Its pathway is cofactor biosynthesis; thiamine diphosphate biosynthesis. Catalyzes the rearrangement of 1-deoxy-D-xylulose 5-phosphate (DXP) to produce the thiazole phosphate moiety of thiamine. Sulfur is provided by the thiocarboxylate moiety of the carrier protein ThiS. In vitro, sulfur can be provided by H(2)S. The polypeptide is Thiazole synthase (Flavobacterium psychrophilum (strain ATCC 49511 / DSM 21280 / CIP 103535 / JIP02/86)).